A 968-amino-acid polypeptide reads, in one-letter code: MDSTLTASKIRQRFIDFFKRNEHTYIHSSATIPLDDPTLLFANAGMNQFKPIFLNTIDPSHPMAKPSRAANTQKCIRAGGKHNDLDDVGKDVYHHTFFEMLGSWSFGDYFKELACKMALELLTQEFGIPIERLYVTYFGGDEAAGLEPDLECKQIWQNLGLDDTKILPGNMKDNFWEMGDTGPCGPCSEIHYDRIGGRDAAHLVNQDDPNVLEIWNLVFIQYNREADGILKPLPKKSIDTGMGLERLVSVLQNKMSNYDTDLFVPYFEAIQKGTGARPYTGKVGAEDADGIDMAYRVLADHARTITVALADGGRPDNTGRGYVLRRILRRAVRYAHEKLNASRGFFATLVDVVVQSLGDAFPELKKDPDMVKDIINEEEVQFLKTLSRGRRILDRKIQSLGDSKTIPGDTAWLLYDTYGFPVDLTGLIAEEKGLVVDMDGFEEERKLAQLKSQGKGAGGEDLIMLDIYAIEELRARDLEVTDDSPKYNYHLDSSGSYVFENTVATVMALRREKMFVEEVSTGQECGVVLDKTCFYAEQGGQIYDEGYLVKVDDSSEDKTEFTVKNAQVRGGYVLHIGTIYGDLKVGDQVWLFIDEPRRRPIMSNHTATHILNFALRSVLGEADQKGSLVAPDRLRFDFTAKGAMSTQQIKKAEEIANEMIEAAKPVYTQDCSLAAAKAIQGLRAVFDETYPDPVRVVSIGVPVSELLDDPSGPAGSLTSVEFCGGTHLRNSSHAGAFVIVTEEAIAKGIRRIVAVTGAEAQKALRKAGSLKKPLSVMEAKVKAQTAPNKDVQREIADLGEALATAVIPQWQKDELRETLKSLKKVMDDLDRASKADVQKRVLEKTKQLIDSNPNQPLVILEMESGASAKALNEALKLFKMHSPQTAAMLFTVDNEAGKITCLCQVPQNAANRGLKASEWVQQVSGLMDGKGGGKDVSAQATGKNVGCLQEALQLATSFAQLRLGDVKN.

N-acetylmethionine is present on methionine 1. Residues serine 3 and serine 8 each carry the phosphoserine modification. At lysine 19 the chain carries N6-acetyllysine. ATP contacts are provided by residues arginine 77, histidine 95, tryptophan 176, and isoleucine 214–asparagine 216. The L-alanine site is built by asparagine 216 and aspartate 239. An ATP-binding site is contributed by glycine 243. Phosphoserine is present on residues serine 399 and serine 555. Zn(2+) is bound by residues histidine 605, histidine 609, cysteine 723, and histidine 727. Residues arginine 750–alanine 763 carry the Nuclear localization signal motif. Lysine 876 is subject to N6-acetyllysine. N6,N6,N6-trimethyllysine; alternate is present on lysine 943. Lysine 943 carries the N6,N6-dimethyllysine; alternate modification. At lysine 943 the chain carries N6-methyllysine; alternate.

This sequence belongs to the class-II aminoacyl-tRNA synthetase family. Monomer. Interacts with ANKRD16; the interaction is direct. Requires Zn(2+) as cofactor. In terms of processing, ISGylated. Methylation at 'Lys-943' by METTL21C.

It is found in the cytoplasm. It localises to the nucleus. It carries out the reaction tRNA(Ala) + L-alanine + ATP = L-alanyl-tRNA(Ala) + AMP + diphosphate. It catalyses the reaction (S)-lactate + ATP + H(+) = (S)-lactoyl-AMP + diphosphate. The catalysed reaction is (S)-lactoyl-AMP + L-lysyl-[protein] = N(6)-[(S)-lactoyl]-L-lysyl-[protein] + AMP + 2 H(+). The protein lactyltransferase activity is inhibited by beta-alanine. Its function is as follows. Catalyzes the attachment of alanine to tRNA(Ala) in a two-step reaction: alanine is first activated by ATP to form Ala-AMP and then transferred to the acceptor end of tRNA(Ala). Also edits incorrectly charged tRNA(Ala) via its editing domain. In presence of high levels of lactate, also acts as a protein lactyltransferase that mediates lactylation of lysine residues in target proteins, such as TEAD1, TP53/p53 and YAP1. Protein lactylation takes place in a two-step reaction: lactate is first activated by ATP to form lactate-AMP and then transferred to lysine residues of target proteins. Acts as an inhibitor of TP53/p53 activity by catalyzing lactylation of TP53/p53. Acts as a positive regulator of the Hippo pathway by mediating lactylation of TEAD1 and YAP1. The protein is Alanine--tRNA ligase, cytoplasmic (AARS1) of Pongo abelii (Sumatran orangutan).